Consider the following 415-residue polypeptide: N-succinylarginine dihydrolase (415 aa).

Residues 18–27, asparagine 100, and 127–128 contribute to the substrate site; these read AGLSRGNIAS and HR. Glutamate 161 is a catalytic residue. Residue arginine 193 coordinates substrate. The active site involves histidine 229. Substrate-binding residues include aspartate 231 and asparagine 340. Cysteine 346 (nucleophile) is an active-site residue.

The protein belongs to the succinylarginine dihydrolase family. As to quaternary structure, homodimer.

It catalyses the reaction N(2)-succinyl-L-arginine + 2 H2O + 2 H(+) = N(2)-succinyl-L-ornithine + 2 NH4(+) + CO2. The protein operates within amino-acid degradation; L-arginine degradation via AST pathway; L-glutamate and succinate from L-arginine: step 2/5. Functionally, catalyzes the hydrolysis of N(2)-succinylarginine into N(2)-succinylornithine, ammonia and CO(2). In Sphingopyxis alaskensis (strain DSM 13593 / LMG 18877 / RB2256) (Sphingomonas alaskensis), this protein is N-succinylarginine dihydrolase.